A 369-amino-acid polypeptide reads, in one-letter code: Chorismate synthase (369 aa).

2 residues coordinate NADP(+): Arg48 and Arg54. Residues 125-127 (RSS), 238-239 (NA), Gly278, 293-297 (KPTSS), and Arg319 each bind FMN.

The protein belongs to the chorismate synthase family. In terms of assembly, homotetramer. It depends on FMNH2 as a cofactor.

It catalyses the reaction 5-O-(1-carboxyvinyl)-3-phosphoshikimate = chorismate + phosphate. It functions in the pathway metabolic intermediate biosynthesis; chorismate biosynthesis; chorismate from D-erythrose 4-phosphate and phosphoenolpyruvate: step 7/7. In terms of biological role, catalyzes the anti-1,4-elimination of the C-3 phosphate and the C-6 proR hydrogen from 5-enolpyruvylshikimate-3-phosphate (EPSP) to yield chorismate, which is the branch point compound that serves as the starting substrate for the three terminal pathways of aromatic amino acid biosynthesis. This reaction introduces a second double bond into the aromatic ring system. This Burkholderia thailandensis (strain ATCC 700388 / DSM 13276 / CCUG 48851 / CIP 106301 / E264) protein is Chorismate synthase.